Reading from the N-terminus, the 154-residue chain is 3-hydroxyacyl-[acyl-carrier-protein] dehydratase FabZ (154 aa).

The active site involves His-55.

It belongs to the thioester dehydratase family. FabZ subfamily.

The protein localises to the cytoplasm. The catalysed reaction is a (3R)-hydroxyacyl-[ACP] = a (2E)-enoyl-[ACP] + H2O. Its function is as follows. Involved in unsaturated fatty acids biosynthesis. Catalyzes the dehydration of short chain beta-hydroxyacyl-ACPs and long chain saturated and unsaturated beta-hydroxyacyl-ACPs. This chain is 3-hydroxyacyl-[acyl-carrier-protein] dehydratase FabZ, found in Oleidesulfovibrio alaskensis (strain ATCC BAA-1058 / DSM 17464 / G20) (Desulfovibrio alaskensis).